The primary structure comprises 158 residues: NADPH-dependent 7-cyano-7-deazaguanine reductase (158 aa).

The active-site Thioimide intermediate is Cys56. Asp63 functions as the Proton donor in the catalytic mechanism. Residues 78-80 and 97-98 each bind substrate; these read VES and HE.

This sequence belongs to the GTP cyclohydrolase I family. QueF type 1 subfamily.

The protein resides in the cytoplasm. It carries out the reaction 7-aminomethyl-7-carbaguanine + 2 NADP(+) = 7-cyano-7-deazaguanine + 2 NADPH + 3 H(+). It participates in tRNA modification; tRNA-queuosine biosynthesis. Its function is as follows. Catalyzes the NADPH-dependent reduction of 7-cyano-7-deazaguanine (preQ0) to 7-aminomethyl-7-deazaguanine (preQ1). The sequence is that of NADPH-dependent 7-cyano-7-deazaguanine reductase from Rhodopseudomonas palustris (strain BisB5).